The sequence spans 151 residues: Transcriptional repressor NrdR (151 aa).

Residues 3 to 34 fold into a zinc finger; sequence CPYCAYGESKVVDSRSTEDGSSIRRRRECLKC. Residues 49–139 form the ATP-cone domain; the sequence is ILVIKKNMSR…VYRQFKDINT (91 aa).

This sequence belongs to the NrdR family. Requires Zn(2+) as cofactor.

Negatively regulates transcription of bacterial ribonucleotide reductase nrd genes and operons by binding to NrdR-boxes. This chain is Transcriptional repressor NrdR, found in Clostridium botulinum (strain 657 / Type Ba4).